The sequence spans 174 residues: Peptide methionine sulfoxide reductase MsrA (174 aa).

Cys10 is an active-site residue.

This sequence belongs to the MsrA Met sulfoxide reductase family.

It catalyses the reaction L-methionyl-[protein] + [thioredoxin]-disulfide + H2O = L-methionyl-(S)-S-oxide-[protein] + [thioredoxin]-dithiol. The enzyme catalyses [thioredoxin]-disulfide + L-methionine + H2O = L-methionine (S)-S-oxide + [thioredoxin]-dithiol. In terms of biological role, has an important function as a repair enzyme for proteins that have been inactivated by oxidation. Catalyzes the reversible oxidation-reduction of methionine sulfoxide in proteins to methionine. The polypeptide is Peptide methionine sulfoxide reductase MsrA (Acinetobacter baumannii (strain SDF)).